A 296-amino-acid polypeptide reads, in one-letter code: Protoheme IX farnesyltransferase (296 aa).

9 helical membrane-spanning segments follow: residues valine 9 to alanine 29, tyrosine 36 to phenylalanine 56, alanine 84 to glycine 104, leucine 108 to methionine 128, valine 133 to alanine 153, leucine 163 to phenylalanine 183, isoleucine 209 to alanine 229, leucine 234 to valine 254, and phenylalanine 265 to valine 285.

Belongs to the UbiA prenyltransferase family. Protoheme IX farnesyltransferase subfamily.

The protein localises to the cell inner membrane. It carries out the reaction heme b + (2E,6E)-farnesyl diphosphate + H2O = Fe(II)-heme o + diphosphate. The protein operates within porphyrin-containing compound metabolism; heme O biosynthesis; heme O from protoheme: step 1/1. Converts heme B (protoheme IX) to heme O by substitution of the vinyl group on carbon 2 of heme B porphyrin ring with a hydroxyethyl farnesyl side group. The chain is Protoheme IX farnesyltransferase from Citrobacter koseri (strain ATCC BAA-895 / CDC 4225-83 / SGSC4696).